The chain runs to 163 residues: Acetolactate synthase isozyme 3 small subunit (163 aa).

One can recognise an ACT domain in the interval 4–78 (ILSVLLENES…DVLRVSELGQ (75 aa)).

The protein belongs to the acetolactate synthase small subunit family. As to quaternary structure, dimer of large and small chains.

It catalyses the reaction 2 pyruvate + H(+) = (2S)-2-acetolactate + CO2. It participates in amino-acid biosynthesis; L-isoleucine biosynthesis; L-isoleucine from 2-oxobutanoate: step 1/4. The protein operates within amino-acid biosynthesis; L-valine biosynthesis; L-valine from pyruvate: step 1/4. Sensitive to valine inhibition. The chain is Acetolactate synthase isozyme 3 small subunit (ilvH) from Escherichia coli (strain K12).